A 299-amino-acid polypeptide reads, in one-letter code: uncharacterized protein (299 aa).

This is an uncharacterized protein from Acanthamoeba polyphaga mimivirus (APMV).